The sequence spans 126 residues: Nascent polypeptide-associated complex protein (126 aa).

The region spanning 10–77 is the NAC-A/B domain; the sequence is PRMMKQMQKM…AKKVAKAEEK (68 aa).

Belongs to the NAC-alpha family. As to quaternary structure, homodimer. Interacts with the ribosome. Binds ribosomal RNA.

Contacts the emerging nascent chain on the ribosome. The sequence is that of Nascent polypeptide-associated complex protein from Methanococcus maripaludis (strain C5 / ATCC BAA-1333).